A 245-amino-acid chain; its full sequence is 1-(5-phosphoribosyl)-5-[(5-phosphoribosylamino)methylideneamino] imidazole-4-carboxamide isomerase (245 aa).

Asp-8 acts as the Proton acceptor in catalysis. Asp-129 serves as the catalytic Proton donor.

Belongs to the HisA/HisF family.

It is found in the cytoplasm. It carries out the reaction 1-(5-phospho-beta-D-ribosyl)-5-[(5-phospho-beta-D-ribosylamino)methylideneamino]imidazole-4-carboxamide = 5-[(5-phospho-1-deoxy-D-ribulos-1-ylimino)methylamino]-1-(5-phospho-beta-D-ribosyl)imidazole-4-carboxamide. It participates in amino-acid biosynthesis; L-histidine biosynthesis; L-histidine from 5-phospho-alpha-D-ribose 1-diphosphate: step 4/9. This chain is 1-(5-phosphoribosyl)-5-[(5-phosphoribosylamino)methylideneamino] imidazole-4-carboxamide isomerase, found in Trichlorobacter lovleyi (strain ATCC BAA-1151 / DSM 17278 / SZ) (Geobacter lovleyi).